A 94-amino-acid polypeptide reads, in one-letter code: Large ribosomal subunit protein eL42 (94 aa).

Cys-11, Cys-14, Cys-71, and Cys-74 together coordinate Zn(2+). The C4-type zinc finger occupies 11–74; it reads CPFCKRHTIH…LDLRFRCTVC (64 aa).

It belongs to the eukaryotic ribosomal protein eL42 family. In terms of assembly, part of the 50S ribosomal subunit. The cofactor is Zn(2+).

In terms of biological role, binds to the 23S rRNA. The protein is Large ribosomal subunit protein eL42 of Pyrococcus abyssi (strain GE5 / Orsay).